We begin with the raw amino-acid sequence, 331 residues long: Terpene synthase 8 (331 aa).

The DDxx(x)D/E motif motif lies at 97–102 (DDFYLE). An NDxxSxxxD/E motif motif is present at residues 228-236 (NDIYSFNKE).

This sequence belongs to the terpene synthase family.

In terms of biological role, terpene synthase that converts its substrate farnesyl diphosphate (FPP) into several yet unidentified sesquiterpenes. This chain is Terpene synthase 8, found in Dictyostelium purpureum (Slime mold).